Reading from the N-terminus, the 710-residue chain is Iron-sulfur clusters transporter ATM1, mitochondrial (710 aa).

The N-terminal 38 residues, 1–38, are a transit peptide targeting the mitochondrion; sequence MWLSLPRSGYGSVATLTSKRVLACLTPLRQFSTSPAVS. Residues 35–52 show a composition bias toward polar residues; the sequence is PAVSNANHKNVDNINKSP. Residues 35–83 are disordered; it reads PAVSNANHKNVDNINKSPANDAANNAVEKGDKPTTSPEKLATKAEKSSA. Topologically, residues 39–129 are mitochondrial matrix; that stretch reads NANHKNVDNI…PKGKTSVKFR (91 aa). Residues 130–151 traverse the membrane as a helical segment; it reads VLVAVALLVGAKLLNVQVPFFF. Residues 130–419 enclose the ABC transmembrane type-1 domain; it reads VLVAVALLVG…LGSVYRDLRQ (290 aa). Residues 152–173 are Mitochondrial intermembrane-facing; the sequence is KEIIDDMNIEWNSATALGVGIT. The helical transmembrane segment at 174-197 threads the bilayer; sequence ALIFSYGAARFGAVLFGELRNAIF. Topologically, residues 198 to 246 are mitochondrial matrix; it reads ASVAQKAIKEVATNVFRHLLKLDMAFHLSRQTGGITRAIDRGTKGISFV. Residues 247–270 form a helical membrane-spanning segment; the sequence is LSSMVFHIIPIALEISLVCGILSY. Residue asparagine 271 is a topological domain, mitochondrial intermembrane. Residues 272 to 292 form a helical membrane-spanning segment; sequence FGWKYALVTGATMVSYAIFTI. The Mitochondrial matrix portion of the chain corresponds to 293-358; it reads TTTSWRTKFR…ASIKIATSLA (66 aa). Glutathione-binding positions include 298-302 and 361-364; these read RTKFR and NSGQ. Residues 359–377 traverse the membrane as a helical segment; the sequence is FLNSGQNLIFSSALTAMMY. Residues 378 to 392 are Mitochondrial intermembrane-facing; the sequence is MTCCGVADGSLTVGD. Residues 393–414 traverse the membrane as a helical segment; that stretch reads LVLVNQLVFQLSVPLNFLGSVY. Residue glycine 411 participates in glutathione binding. The Mitochondrial matrix portion of the chain corresponds to 415-710; it reads RDLRQSLLDM…AEEKAAKKDV (296 aa). In terms of domain architecture, ABC transporter spans 453–687; it reads IRFENVTYGY…DGLYKSMWDA (235 aa). ATP is bound by residues tyrosine 462 and 486–497; that span reads GPSGSGKSTILK.

Belongs to the ABC transporter superfamily. ABCB family. Heavy Metal importer (TC 3.A.1.210) subfamily. In terms of assembly, homodimer.

It is found in the mitochondrion inner membrane. In terms of biological role, performs an essential function in the generation of cytoplasmic iron-sulfur proteins by mediating the ATP-dependent export of Fe/S cluster precursors synthesized by NFS1 and other mitochondrial proteins. Hydrolyzes ATP. Binds glutathione and may function by transporting a glutathione-conjugated iron-sulfur compound. The sequence is that of Iron-sulfur clusters transporter ATM1, mitochondrial from Yarrowia lipolytica (strain CLIB 122 / E 150) (Yeast).